Reading from the N-terminus, the 326-residue chain is D-alanine--D-alanine ligase (326 aa).

An ATP-grasp domain is found at 112–312 (KRIWRFEGLP…YENLCLGILA (201 aa)). Residue 138 to 193 (LQALGAPMIVKPSREGSTIGLTKVWTAEECDQAYVLASRYDPEVLCEEFIEGDETT) participates in ATP binding. Mg(2+)-binding residues include Asp265, Glu279, and Asn281.

This sequence belongs to the D-alanine--D-alanine ligase family. It depends on Mg(2+) as a cofactor. The cofactor is Mn(2+).

It localises to the cytoplasm. The catalysed reaction is 2 D-alanine + ATP = D-alanyl-D-alanine + ADP + phosphate + H(+). It functions in the pathway cell wall biogenesis; peptidoglycan biosynthesis. Its function is as follows. Cell wall formation. This chain is D-alanine--D-alanine ligase, found in Delftia acidovorans (strain DSM 14801 / SPH-1).